Reading from the N-terminus, the 469-residue chain is Calcium-binding mitochondrial carrier protein SCaMC-2-B (469 aa).

At 1–189 (MLCLCLYVPV…EKNTGMWWRH (189 aa)) the chain is on the mitochondrial intermembrane side. EF-hand domains are found at residues 47–80 (SYRK…RDHE), 78–113 (DHEK…LGVH), and 114–149 (ISEE…HPAE). The Ca(2+) site is built by Asp-60, Asp-62, Asp-64, Gln-66, and Glu-71. Solcar repeat units lie at residues 184 to 270 (GMWW…IKRL), 278 to 363 (LGIL…LKNS), and 375 to 463 (PGVF…LKIT). A helical transmembrane segment spans residues 190–207 (LVAGGGAGAVSRTCTAPL). Over 208-244 (DRLKVLMQVHATRSNSMGIAGGFTQMIREGGLRSLWR) the chain is Mitochondrial matrix. The helical transmembrane segment at 245–264 (GNGINVLKIAPESAIKFMAY) threads the bilayer. Residues 265–287 (EQIKRLIGSNQETLGILERLVSG) are Mitochondrial intermembrane-facing. Residues 288 to 301 (SLAGAIAQSSIYPM) traverse the membrane as a helical segment. Over 302-337 (EVLKTRLALGRTGQYSGIADCAKHIFKKEGMTAFYK) the chain is Mitochondrial matrix. A helical transmembrane segment spans residues 338-357 (GYIPNMLGIIPYAGIDLAVY). Residues 358 to 380 (ETLKNSWLQRFATDSADPGVFVL) are Mitochondrial intermembrane-facing. The chain crosses the membrane as a helical span at residues 381–398 (LACGTMSSTCGQLASYPL). At 399-437 (ALVRTRMQAQASQEGSPQMTMSGLFRHIVRTEGAIGLYR) the chain is on the mitochondrial matrix side. Residues 438–457 (GLAPNFMKVIPAVSISYVVY) traverse the membrane as a helical segment. Residues 458 to 469 (ENLKITLGVQSR) are Mitochondrial intermembrane-facing.

It belongs to the mitochondrial carrier (TC 2.A.29) family.

The protein resides in the mitochondrion inner membrane. In terms of biological role, calcium-dependent mitochondrial solute carrier. The polypeptide is Calcium-binding mitochondrial carrier protein SCaMC-2-B (slc25a25b) (Danio rerio (Zebrafish)).